A 1676-amino-acid polypeptide reads, in one-letter code: Protein TIC 214 (1676 aa).

6 helical membrane passes run 23-43 (AGPL…PIAP), 71-91 (GILI…FLSI), 96-116 (LYMI…YMFF), 145-165 (AFLD…SPVM), 179-199 (VSLF…MFVL), and 226-246 (IFPP…PVSF).

It belongs to the TIC214 family. In terms of assembly, part of the Tic complex.

The protein resides in the plastid. It is found in the chloroplast inner membrane. Functionally, involved in protein precursor import into chloroplasts. May be part of an intermediate translocation complex acting as a protein-conducting channel at the inner envelope. The sequence is that of Protein TIC 214 from Zygnema circumcarinatum (Green alga).